We begin with the raw amino-acid sequence, 586 residues long: Arginine--tRNA ligase (586 aa).

A 'HIGH' region motif is present at residues 131–141 (ANPTGPLHVGH).

The protein belongs to the class-I aminoacyl-tRNA synthetase family. As to quaternary structure, monomer.

Its subcellular location is the cytoplasm. It carries out the reaction tRNA(Arg) + L-arginine + ATP = L-arginyl-tRNA(Arg) + AMP + diphosphate. This is Arginine--tRNA ligase from Nitrosomonas eutropha (strain DSM 101675 / C91 / Nm57).